We begin with the raw amino-acid sequence, 235 residues long: Ornithine decarboxylase antizyme 3 (235 aa).

Residues serine 9 and serine 12 each carry the phosphoserine modification.

It belongs to the ODC antizyme family. As to quaternary structure, interacts with ODC1 and thereby sterically blocks ODC homodimerization. Interacts with AZIN2; this interaction disrupts the interaction between the antizyme and ODC1. Interacts with GGN. As to expression, testis specific.

The protein resides in the nucleus. It localises to the cytoplasm. Functionally, ornithine decarboxylase (ODC) antizyme protein that negatively regulates ODC activity and intracellular polyamine biosynthesis and uptake in response to increased intracellular polyamine levels. Binds to ODC monomers, inhibiting the assembly of the functional ODC homodimers. Does not target the ODC monomers for degradation, which allows a protein synthesis-independent restoration of ODC activity. Stabilizes AZIN2 by interfering with its ubiquitination. Involved in the translocation of AZNI2 from ER-Golgi intermediate compartment (ERGIC) to the cytosol. Probably plays a key role in spermatogenesis by regulating the intracellular concentration of polyamines in haploid germ cells. The polypeptide is Ornithine decarboxylase antizyme 3 (OAZ3) (Homo sapiens (Human)).